Consider the following 305-residue polypeptide: Protein FdhE homolog (305 aa).

This sequence belongs to the FdhE family.

The protein resides in the cytoplasm. In terms of biological role, necessary for formate dehydrogenase activity. This is Protein FdhE homolog from Stutzerimonas stutzeri (strain A1501) (Pseudomonas stutzeri).